The following is a 126-amino-acid chain: uncharacterized protein (126 aa).

The VOC domain maps to 4–126; it reads RIDHTGIMVR…DGEWIEFFQR (123 aa). H7, E42, H74, and E122 together coordinate a divalent metal cation.

Belongs to the glyoxalase I family.

This is an uncharacterized protein from Bacillus subtilis (strain 168).